Consider the following 296-residue polypeptide: tRNA dimethylallyltransferase (296 aa).

11-18 contributes to the ATP binding site; the sequence is GPTAVGKT. 13–18 contributes to the substrate binding site; that stretch reads TAVGKT. Positions 36–39 are interaction with substrate tRNA; that stretch reads DSQQ.

The protein belongs to the IPP transferase family. As to quaternary structure, monomer. Mg(2+) is required as a cofactor.

It carries out the reaction adenosine(37) in tRNA + dimethylallyl diphosphate = N(6)-dimethylallyladenosine(37) in tRNA + diphosphate. Functionally, catalyzes the transfer of a dimethylallyl group onto the adenine at position 37 in tRNAs that read codons beginning with uridine, leading to the formation of N6-(dimethylallyl)adenosine (i(6)A). The sequence is that of tRNA dimethylallyltransferase from Streptococcus agalactiae serotype Ia (strain ATCC 27591 / A909 / CDC SS700).